The primary structure comprises 1067 residues: FHIP family protein GL19323 (1067 aa).

A compositionally biased stretch (polar residues) spans 1–11 (MSWLRSSPLRQ). 3 disordered regions span residues 1-31 (MSWLRSSPLRQSGNGGGGGVSTGHSSTGSLR), 503-525 (LARPKSVHEQQPPSGATGEQPIQ), and 832-1013 (NENS…SEPA). Residues Ser-508 and Ser-835 each carry the phosphoserine modification. The span at 842 to 858 (QPQTTLSQQQQQQQGQQ) shows a compositional bias: low complexity. Over residues 859 to 878 (RSAYATLSAATPVQATQTSA) the composition is skewed to polar residues. The span at 893 to 904 (SKSISSMFSRRS) shows a compositional bias: low complexity. Positions 918–949 (LVGNNNSGSGQSQPFSSTGTGTCETSLSTNPQ) are enriched in polar residues. Positions 950-979 (SGAAAARSTGTATTANGNSSNSNISIGGST) are enriched in low complexity. A compositionally biased stretch (polar residues) spans 980-996 (QTLSGHSNTTTYSSSTL).

It belongs to the FHIP family.

The polypeptide is FHIP family protein GL19323 (Drosophila persimilis (Fruit fly)).